The chain runs to 140 residues: UPF0102 protein Ppro_1186 (140 aa).

A disordered region spans residues 1–27 (MKRPGDGRQESPSSTARPDNRNTGSRG). Polar residues predominate over residues 10 to 25 (ESPSSTARPDNRNTGS).

This sequence belongs to the UPF0102 family.

The protein is UPF0102 protein Ppro_1186 of Pelobacter propionicus (strain DSM 2379 / NBRC 103807 / OttBd1).